The chain runs to 418 residues: Metal tolerance protein 1 (418 aa).

At 1-56 (MDSHNSAPPQIAEVRMDISSSTSVAAGNKVCRGAACDFSDSSNSSKDARERMASMR) the chain is on the cytoplasmic side. The chain crosses the membrane as a helical span at residues 57–77 (KLIIAVILCIIFMAVEVVGGI). The Vacuolar portion of the chain corresponds to 78–89 (KANSLAILTDAA). Residues 90 to 110 (HLLSDVAAFAISLFSLWAAGW) traverse the membrane as a helical segment. The Cytoplasmic segment spans residues 111–122 (EATPQQSYGFFR). The helical transmembrane segment at 123-143 (IEILGALVSIQLIWLLAGILV) threads the bilayer. The Vacuolar segment spans residues 144 to 160 (YEAIVRLINESGEVQGS). The chain crosses the membrane as a helical span at residues 161-181 (LMFAVSAFGLFVNIIMAVLLG). The required for zinc-binding stretch occupies residues 182 to 246 (HDHGHGHGHG…HHPGTGHHHH (65 aa)). The Cytoplasmic portion of the chain corresponds to 182–282 (HDHGHGHGHG…RRNINVHSAY (101 aa)). Positions 186–248 (HGHGHGHGHG…PGTGHHHHDA (63 aa)) are disordered. Residues 196 to 227 (HSHDHDHGGSDHDHHHHEDQEHGHVHHHEDGH) are compositionally biased toward basic and acidic residues. The span at 235–245 (LHHHPGTGHHH) shows a compositional bias: basic residues. A helical transmembrane segment spans residues 283–303 (LHVLGDSIQSIGVMIGGAIIW). At 304–307 (YKPE) the chain is on the vacuolar side. Residues 308-328 (WKIIDLICTLIFSVIVLFTTI) traverse the membrane as a helical segment. Residues 329–418 (KMLRNILEVL…SHVTIQIERE (90 aa)) lie on the Cytoplasmic side of the membrane.

It belongs to the cation diffusion facilitator (CDF) transporter (TC 2.A.4) family. SLC30A subfamily.

It is found in the vacuole membrane. Its function is as follows. Involved in sequestration of excess zinc in the cytoplasm into vacuoles to maintain zinc homeostasis. This is Metal tolerance protein 1 (MTP1) from Oryza sativa subsp. japonica (Rice).